The sequence spans 149 residues: MYIGSSMDIQTILEKTLPGLGYELVDFELAAQGTLRVFIDKEGGITVEDCATVSNHLSRVFMVEDIGYKNLEISSPGLDRPLKKAADFVRFAGQNAKIKTRLPIGGQKNFIGKIEGCENDTVTVSFDGKTVQIELGNIDKARLRPEFKF.

Belongs to the RimP family.

It localises to the cytoplasm. Its function is as follows. Required for maturation of 30S ribosomal subunits. This chain is Ribosome maturation factor RimP, found in Neisseria gonorrhoeae (strain NCCP11945).